Consider the following 560-residue polypeptide: NAD(P)H-quinone oxidoreductase chain 4-3 (560 aa).

A run of 14 helical transmembrane segments spans residues 5 to 25 (FPWL…IPLL), 35 to 55 (WYAL…FWHH), 86 to 106 (ISMP…LAAW), 114 to 134 (LFYF…VAQD), 135 to 155 (LLLF…LVSI), 168 to 188 (FLLY…AMAL), 208 to 228 (ALEL…LAIF), 242 to 262 (SAPV…YGLI), 273 to 293 (HIYF…YGGL), 310 to 330 (VSHM…GVSG), 331 to 351 (AMLQ…LAGV), 374 to 394 (VFAL…MSGF), 417 to 437 (VMVF…LSML), and 488 to 508 (VFIA…PKIA).

This sequence belongs to the complex I subunit 4 family.

Its subcellular location is the cellular thylakoid membrane. The enzyme catalyses a plastoquinone + NADH + (n+1) H(+)(in) = a plastoquinol + NAD(+) + n H(+)(out). It catalyses the reaction a plastoquinone + NADPH + (n+1) H(+)(in) = a plastoquinol + NADP(+) + n H(+)(out). Its function is as follows. NDH-1 shuttles electrons from NAD(P)H, via FMN and iron-sulfur (Fe-S) centers, to quinones in the respiratory chain. The immediate electron acceptor for the enzyme in this species is believed to be plastoquinone. Couples the redox reaction to proton translocation (for every two electrons transferred, four hydrogen ions are translocated across the cytoplasmic membrane), and thus conserves the redox energy in a proton gradient. The protein is NAD(P)H-quinone oxidoreductase chain 4-3 (ndhD3) of Nostoc sp. (strain PCC 7120 / SAG 25.82 / UTEX 2576).